A 590-amino-acid chain; its full sequence is Kinetochore protein ndc-80 (590 aa).

2 coiled-coil regions span residues 269–342 (KGNE…KQIH) and 450–525 (ELET…MKLD).

It belongs to the NDC80/HEC1 family. As to quaternary structure, component of the NDC80 complex, which is composed of at least ndc-80 and him-10. The NDC80 complex interacts with knl-1. Interacts with the RZZ complex components rod-1 (via N-terminus) and zwl-1.

It localises to the nucleus. The protein localises to the chromosome. It is found in the centromere. Its subcellular location is the kinetochore. The protein resides in the cytoplasm. It localises to the cytoskeleton. Functionally, acts as a component of the essential kinetochore-associated ndc-80 complex, which is required for chromosome segregation in mitosis and meiosis and spindle checkpoint activity. Plays a role in kinetochore assembly and recruits the checkpoint protein mdf-2 and the spindly-like protein spdl-1 to unattached kinetochores. Mediates the formation of end-on kinetochore-microtubule attachments through recruitment of spdl-1. The ndc-80 complex synergistically enhances the affinity of the ska-1 complex for microtubules and may allow the ndc-80 complex to track depolymerizing microtubules. This chain is Kinetochore protein ndc-80 (ndc-80), found in Caenorhabditis elegans.